Here is a 93-residue protein sequence, read N- to C-terminus: Sec-independent protein translocase protein TatA (93 aa).

A helical transmembrane segment spans residues 1 to 21 (MGIFDWKHWIVILVVVVLVFG). Positions 43–93 (MNDDEKPAEPVVPPAAQPVPPVQPQQSAPLNQPHTIDVQAQKVEEPTRKDS) are disordered. Pro residues predominate over residues 52–65 (PVVPPAAQPVPPVQ). Residues 84 to 93 (KVEEPTRKDS) show a composition bias toward basic and acidic residues.

It belongs to the TatA/E family. In terms of assembly, the Tat system comprises two distinct complexes: a TatABC complex, containing multiple copies of TatA, TatB and TatC subunits, and a separate TatA complex, containing only TatA subunits. Substrates initially bind to the TatABC complex, which probably triggers association of the separate TatA complex to form the active translocon.

It localises to the cell inner membrane. Its function is as follows. Part of the twin-arginine translocation (Tat) system that transports large folded proteins containing a characteristic twin-arginine motif in their signal peptide across membranes. TatA could form the protein-conducting channel of the Tat system. The protein is Sec-independent protein translocase protein TatA of Pseudomonas fluorescens (strain ATCC BAA-477 / NRRL B-23932 / Pf-5).